We begin with the raw amino-acid sequence, 132 residues long: Translation initiation factor 5A (132 aa).

Position 36 is a hypusine (lysine 36).

This sequence belongs to the eIF-5A family.

It is found in the cytoplasm. Functionally, functions by promoting the formation of the first peptide bond. The sequence is that of Translation initiation factor 5A (eIF5A) from Pyrobaculum arsenaticum (strain DSM 13514 / JCM 11321 / PZ6).